We begin with the raw amino-acid sequence, 108 residues long: Urease subunit gamma (108 aa).

This sequence belongs to the urease gamma subunit family. As to quaternary structure, heterotrimer of UreA (gamma), UreB (beta) and UreC (alpha) subunits. Three heterotrimers associate to form the active enzyme.

It localises to the cytoplasm. The catalysed reaction is urea + 2 H2O + H(+) = hydrogencarbonate + 2 NH4(+). Its pathway is nitrogen metabolism; urea degradation; CO(2) and NH(3) from urea (urease route): step 1/1. The chain is Urease subunit gamma from Haloquadratum walsbyi (strain DSM 16790 / HBSQ001).